Reading from the N-terminus, the 559-residue chain is Potassium-transporting ATPase potassium-binding subunit (559 aa).

The next 12 membrane-spanning stretches (helical) occupy residues 7–27, 63–83, 132–152, 170–190, 253–273, 283–303, 327–347, 356–376, 379–399, 416–436, 484–504, and 524–544; these read LLIA…GSGL, LLAL…LLFW, GLTV…FALI, LVRI…LFFI, MVQM…FGEA, LLWA…WAEV, FGVL…CGAV, ALGG…FGGV, GLYG…LMIG, MTAL…ALAM, LLAF…MAIA, and GALF…LTFI.

Belongs to the KdpA family. As to quaternary structure, the system is composed of three essential subunits: KdpA, KdpB and KdpC.

The protein resides in the cell inner membrane. Part of the high-affinity ATP-driven potassium transport (or Kdp) system, which catalyzes the hydrolysis of ATP coupled with the electrogenic transport of potassium into the cytoplasm. This subunit binds the periplasmic potassium ions and delivers the ions to the membrane domain of KdpB through an intramembrane tunnel. This is Potassium-transporting ATPase potassium-binding subunit from Salmonella arizonae (strain ATCC BAA-731 / CDC346-86 / RSK2980).